The primary structure comprises 430 residues: Gamma-glutamyl phosphate reductase (430 aa).

It belongs to the gamma-glutamyl phosphate reductase family.

It is found in the cytoplasm. The enzyme catalyses L-glutamate 5-semialdehyde + phosphate + NADP(+) = L-glutamyl 5-phosphate + NADPH + H(+). Its pathway is amino-acid biosynthesis; L-proline biosynthesis; L-glutamate 5-semialdehyde from L-glutamate: step 2/2. Catalyzes the NADPH-dependent reduction of L-glutamate 5-phosphate into L-glutamate 5-semialdehyde and phosphate. The product spontaneously undergoes cyclization to form 1-pyrroline-5-carboxylate. This Rhodopseudomonas palustris (strain BisA53) protein is Gamma-glutamyl phosphate reductase.